A 475-amino-acid polypeptide reads, in one-letter code: FAD-dependent monooxygenase spyC (475 aa).

The first 24 residues, 1–24, serve as a signal peptide directing secretion; it reads MTAKPPFKVIIVGGSIAGLTLAHC. FAD contacts are provided by E36, G50, R109, D310, and A323. The chain crosses the membrane as a helical span at residues 444 to 464; it reads LLIPFLYPVVAFSLCVLAWIG.

Belongs to the paxM FAD-dependent monooxygenase family. FAD is required as a cofactor.

It is found in the membrane. It catalyses the reaction (2E,6E,10E)-geranylgeranyl-triacetate lactone + AH2 + O2 = (S)-(2E,6E,10E)-epoxygeranylgeranyl-triacetate lactone + A + H2O. It functions in the pathway secondary metabolite biosynthesis; terpenoid biosynthesis. Functionally, FAD-dependent monooxygenase spyC; part of the gene cluster that mediates the biosynthesis of meroterpenoids called sartorypyrones. Within the pathway, spyC catalyzes the epoxidation of geranylgeranyl-triacetate lactone at the terminal olein to yield epoxygeranylgeranyl-triacetate lactone. The biosynthesis of sartorypyrones begins with the production of triacetic acid lactone (TAL) by the NR-PKS spyA using one molecule of acetyl-CoA and two molecules of malonyl-CoA. The prenyltransferase spyF then conjugates geranylgeranyl pyrophosphate (GGPP) to TAL to form geranylgeranyl-triacetate lactone, for which the pathway-specific geranylgeranyl pyrophosphate synthase (GGPS) spyE is required to provide GGPP. Subsequently, geranylgeranyl-triacetate lactone is epoxidized at the terminal olein by the FAD-dependent monooxygenase spyC, followed by cyclization of the terpenoid component catalyzed by the terpene cyclase spyD to produce both the bicyclic sartorypyrone F and the monocyclic sartorypyrone D. Finally, the last step of the biosynthesis involves the acetylation of the meroterpenoids sartorypyrones D and F by the acetyltransferase SpyB to produce sartorypyrones A and G, respectively. In Aspergillus fumigatus (strain ATCC MYA-4609 / CBS 101355 / FGSC A1100 / Af293) (Neosartorya fumigata), this protein is FAD-dependent monooxygenase spyC.